The following is a 127-amino-acid chain: 3-aminoacrylate deaminase RutC (127 aa).

It belongs to the RutC family.

It catalyses the reaction (Z)-3-aminoacrylate + H2O + H(+) = 3-oxopropanoate + NH4(+). Involved in pyrimidine catabolism. Catalyzes the deamination of 3-aminoacrylate to malonic semialdehyde, a reaction that can also occur spontaneously. RutC may facilitate the reaction and modulate the metabolic fitness, rather than catalyzing essential functions. The chain is 3-aminoacrylate deaminase RutC from Pseudomonas savastanoi pv. phaseolicola (strain 1448A / Race 6) (Pseudomonas syringae pv. phaseolicola (strain 1448A / Race 6)).